The primary structure comprises 711 residues: Denticleless protein homolog B (711 aa).

3 WD repeats span residues 47 to 89 (GRAV…MQRL), 96 to 135 (AHTN…LIGE), and 138 to 178 (GHQC…KDGF). The DDB1-binding motif motif lies at 168–171 (WDTR). The short motif at 197–204 (PSKVKKRK) is the Nuclear localization signal element. WD repeat units lie at residues 215–254 (DSQQ…STYR), 270–309 (TRKL…TDPV), 314–355 (GHQN…AAPI), and 359–398 (GHCQ…SEDS). The short motif at 244–247 (WDLR) is the DDB1-binding motif element. Disordered stretches follow at residues 473–524 (QTPK…AFTP) and 601–698 (EFDQ…TPGS). Composition is skewed to polar residues over residues 504–516 (TPKS…SKTP) and 606–627 (LSPS…TLSP). Over residues 631–642 (MKSDFVDKENSS) the composition is skewed to basic and acidic residues. The span at 658–675 (DNSSPQFKSSSSPSSRNS) shows a compositional bias: low complexity. The segment covering 684 to 697 (NAPNSPVSVPTTPG) has biased composition (polar residues).

The protein belongs to the WD repeat cdt2 family. Component of the DCX(DTL) E3 ubiquitin ligase complex, at least composed of cul4 (cul4a or cul4b), ddb1, dtl/cdt2 and rbx1.

The protein localises to the nucleus. It is found in the cytoplasm. Its subcellular location is the cytoskeleton. The protein resides in the microtubule organizing center. It localises to the centrosome. The protein localises to the chromosome. It participates in protein modification; protein ubiquitination. In terms of biological role, substrate-specific adapter of a DCX (DDB1-CUL4-X-box) E3 ubiquitin-protein ligase complex required for cell cycle control, DNA damage response and translesion DNA synthesis. The DCX(DTL) complex, also named CRL4(CDT2) complex, mediates the polyubiquitination and subsequent degradation of CDT1, CDKN1A/p21(CIP1), KMT5A and SDE2. CDT1 degradation in response to DNA damage is necessary to ensure proper cell cycle regulation of DNA replication. CDKN1A/p21(CIP1) degradation during S phase or following UV irradiation is essential to control replication licensing. KMT5A degradation is also important for a proper regulation of mechanisms such as TGF-beta signaling, cell cycle progression, DNA repair and cell migration. Most substrates require their interaction with PCNA for their polyubiquitination: substrates interact with PCNA via their PIP-box, and those containing the 'K+4' motif in the PIP box, recruit the DCX(DTL) complex, leading to their degradation. In undamaged proliferating cells, the DCX(DTL) complex also promotes the 'Lys-164' monoubiquitination of PCNA, thereby being involved in PCNA-dependent translesion DNA synthesis. May play a role in the regulation of the circadian clock. The chain is Denticleless protein homolog B (dtl-b) from Xenopus laevis (African clawed frog).